The primary structure comprises 89 residues: Small ribosomal subunit protein uS15 (89 aa).

Residues 1 to 11 (MSITAERKAEV) show a composition bias toward basic and acidic residues. Positions 1–24 (MSITAERKAEVIKTNAKKAGDTGS) are disordered.

The protein belongs to the universal ribosomal protein uS15 family. Part of the 30S ribosomal subunit. Forms a bridge to the 50S subunit in the 70S ribosome, contacting the 23S rRNA.

Functionally, one of the primary rRNA binding proteins, it binds directly to 16S rRNA where it helps nucleate assembly of the platform of the 30S subunit by binding and bridging several RNA helices of the 16S rRNA. Forms an intersubunit bridge (bridge B4) with the 23S rRNA of the 50S subunit in the ribosome. This chain is Small ribosomal subunit protein uS15, found in Afipia carboxidovorans (strain ATCC 49405 / DSM 1227 / KCTC 32145 / OM5) (Oligotropha carboxidovorans).